Consider the following 148-residue polypeptide: 3-hydroxyacyl-[acyl-carrier-protein] dehydratase FabZ (148 aa).

H48 is a catalytic residue.

Belongs to the thioester dehydratase family. FabZ subfamily.

It is found in the cytoplasm. The catalysed reaction is a (3R)-hydroxyacyl-[ACP] = a (2E)-enoyl-[ACP] + H2O. In terms of biological role, involved in unsaturated fatty acids biosynthesis. Catalyzes the dehydration of short chain beta-hydroxyacyl-ACPs and long chain saturated and unsaturated beta-hydroxyacyl-ACPs. The sequence is that of 3-hydroxyacyl-[acyl-carrier-protein] dehydratase FabZ from Campylobacter concisus (strain 13826).